Reading from the N-terminus, the 320-residue chain is Biotin synthase 2 (320 aa).

Positions 34–261 constitute a Radical SAM core domain; the sequence is NVVQCSKLLS…ASYVRLSAGR (228 aa). [4Fe-4S] cluster-binding residues include Cys-49, Cys-53, and Cys-56. Cys-93, Cys-124, Cys-184, and Arg-256 together coordinate [2Fe-2S] cluster.

The protein belongs to the radical SAM superfamily. Biotin synthase family. As to quaternary structure, homodimer. [4Fe-4S] cluster serves as cofactor. It depends on [2Fe-2S] cluster as a cofactor.

The enzyme catalyses (4R,5S)-dethiobiotin + (sulfur carrier)-SH + 2 reduced [2Fe-2S]-[ferredoxin] + 2 S-adenosyl-L-methionine = (sulfur carrier)-H + biotin + 2 5'-deoxyadenosine + 2 L-methionine + 2 oxidized [2Fe-2S]-[ferredoxin]. It functions in the pathway cofactor biosynthesis; biotin biosynthesis; biotin from 7,8-diaminononanoate: step 2/2. Catalyzes the conversion of dethiobiotin (DTB) to biotin by the insertion of a sulfur atom into dethiobiotin via a radical-based mechanism. The chain is Biotin synthase 2 from Paracoccus denitrificans (strain Pd 1222).